The primary structure comprises 599 residues: UvrABC system protein C (599 aa).

The 79-residue stretch at 13–91 (NLPGVYRMIN…IKGFMPRYNV (79 aa)) folds into the GIY-YIG domain. A UVR domain is found at 200–235 (QQVMDELGEKMNEAAEKMEYELAAVYRDRIQSLRQV).

Belongs to the UvrC family. In terms of assembly, interacts with UvrB in an incision complex.

It is found in the cytoplasm. In terms of biological role, the UvrABC repair system catalyzes the recognition and processing of DNA lesions. UvrC both incises the 5' and 3' sides of the lesion. The N-terminal half is responsible for the 3' incision and the C-terminal half is responsible for the 5' incision. The protein is UvrABC system protein C of Methylobacillus flagellatus (strain ATCC 51484 / DSM 6875 / VKM B-1610 / KT).